The sequence spans 357 residues: tRNA pseudouridine synthase B (357 aa).

Residue aspartate 42 is the Nucleophile of the active site.

The protein belongs to the pseudouridine synthase TruB family. Type 1 subfamily.

The enzyme catalyses uridine(55) in tRNA = pseudouridine(55) in tRNA. Responsible for synthesis of pseudouridine from uracil-55 in the psi GC loop of transfer RNAs. The polypeptide is tRNA pseudouridine synthase B (Treponema denticola (strain ATCC 35405 / DSM 14222 / CIP 103919 / JCM 8153 / KCTC 15104)).